The chain runs to 139 residues: Probable DNA-binding protein (139 aa).

The interval 97–139 is disordered; it reads DEPSREASPDLGAAGAELEDESAQAGAVQGPETLRSQVLRART.

The chain is Probable DNA-binding protein from Homo sapiens (Human).